Reading from the N-terminus, the 175-residue chain is NADH-ubiquinone oxidoreductase chain 6 (175 aa).

The next 5 helical transmembrane spans lie at 1 to 21 (MMTY…VGFS), 25 to 45 (SPIY…GIVL), 47 to 67 (FGGS…MLVV), 88 to 108 (AVLG…CYIL), and 149 to 169 (YGTW…LVIM).

The protein belongs to the complex I subunit 6 family. In terms of assembly, core subunit of respiratory chain NADH dehydrogenase (Complex I) which is composed of 45 different subunits.

Its subcellular location is the mitochondrion inner membrane. It catalyses the reaction a ubiquinone + NADH + 5 H(+)(in) = a ubiquinol + NAD(+) + 4 H(+)(out). In terms of biological role, core subunit of the mitochondrial membrane respiratory chain NADH dehydrogenase (Complex I) which catalyzes electron transfer from NADH through the respiratory chain, using ubiquinone as an electron acceptor. Essential for the catalytic activity and assembly of complex I. This chain is NADH-ubiquinone oxidoreductase chain 6 (MT-ND6), found in Phoca vitulina (Harbor seal).